A 94-amino-acid polypeptide reads, in one-letter code: Small ribosomal subunit protein uS17 (94 aa).

The protein belongs to the universal ribosomal protein uS17 family. In terms of assembly, part of the 30S ribosomal subunit.

One of the primary rRNA binding proteins, it binds specifically to the 5'-end of 16S ribosomal RNA. The polypeptide is Small ribosomal subunit protein uS17 (Streptomyces avermitilis (strain ATCC 31267 / DSM 46492 / JCM 5070 / NBRC 14893 / NCIMB 12804 / NRRL 8165 / MA-4680)).